Reading from the N-terminus, the 127-residue chain is Small ribosomal subunit protein eS8 (127 aa).

The disordered stretch occupies residues 1-31 (MTIFQGKSGKKATGGSLKQSRKKRRFELGRE).

The protein belongs to the eukaryotic ribosomal protein eS8 family. In terms of assembly, part of the 30S ribosomal subunit.

This is Small ribosomal subunit protein eS8 (rps8e) from Thermoplasma acidophilum (strain ATCC 25905 / DSM 1728 / JCM 9062 / NBRC 15155 / AMRC-C165).